Reading from the N-terminus, the 563-residue chain is E3 ubiquitin-protein ligase IpaH2.5 (563 aa).

The interval 1-270 (MIKSTNIQVI…PDYSGPQIFF (270 aa)) is interaction with target proteins. LRR repeat units lie at residues 69–90 (LQNQEAELNLSELDLKTLPDLP), 91–115 (PQITTLEIRKNLLTHLPDLPPMLKV), 117–130 (HAQFNQLESLPALP), 131–150 (ETLEELNAGDNKIKELPFLP), 151–170 (ENLTHLRVHNNRLHILPLLP), 171–195 (PELKLLVVSGNRLDSIPPFPDKLEG), 197–209 (ALANNFIEQLPEL), and 210–233 (PFSMNRAVLMNNNLTTLPESVLRL). The segment at 271–281 (SMGNSATISAP) is linker. Positions 282-563 (EHSLADAVTA…YRQLTDEVLA (282 aa)) are E3 ubiquitin-protein ligase catalytic domain. The 280-residue stretch at 284–563 (SLADAVTAWF…YRQLTDEVLA (280 aa)) folds into the NEL domain. Cysteine 368 (glycyl thioester intermediate) is an active-site residue.

Belongs to the LRR-containing bacterial E3 ligase family. As to quaternary structure, interacts with human RBCK1/HOIL-1 and RNF31/HOIP components of the LUBAC complex. Post-translationally, ubiquitinated in the presence of host E1 ubiquitin-activating enzyme, E2 ubiquitin-conjugating enzyme and ubiquitin.

The protein localises to the secreted. It is found in the host cytoplasm. It carries out the reaction S-ubiquitinyl-[E2 ubiquitin-conjugating enzyme]-L-cysteine + [acceptor protein]-L-lysine = [E2 ubiquitin-conjugating enzyme]-L-cysteine + N(6)-ubiquitinyl-[acceptor protein]-L-lysine.. It participates in protein modification; protein ubiquitination. With respect to regulation, exists in an autoinhibited state in the absence of substrate protein, probably due to interactions of the leucine-rich repeat domain with the catalytic domain. Is activated upon binding to a substrate protein. E3 ubiquitin-protein ligase effector that inhibits host cell innate immunity during bacterial infection by catalyzing 'Lys-48'-linked polyubiquitination and subsequent degradation of host RNF31/HOIP. Host RNF31/HOIP is the catalytic component of the LUBAC complex, which conjugates linear ('Met-1'-linked) polyubiquitin chains at the surface of bacteria invading the host cytosol to form the ubiquitin coat surrounding bacteria. The bacterial ubiquitin coat acts as an 'eat-me' signal for xenophagy and promotes NF-kappa-B activation. The sequence is that of E3 ubiquitin-protein ligase IpaH2.5 from Shigella flexneri.